The sequence spans 523 residues: Light-independent protochlorophyllide reductase subunit B (523 aa).

Aspartate 36 contacts [4Fe-4S] cluster. Aspartate 290 acts as the Proton donor in catalysis. Position 425 to 426 (425 to 426) interacts with substrate; sequence GL.

It belongs to the ChlB/BchB/BchZ family. In terms of assembly, protochlorophyllide reductase is composed of three subunits; ChlL, ChlN and ChlB. Forms a heterotetramer of two ChlB and two ChlN subunits. Requires [4Fe-4S] cluster as cofactor.

It carries out the reaction chlorophyllide a + oxidized 2[4Fe-4S]-[ferredoxin] + 2 ADP + 2 phosphate = protochlorophyllide a + reduced 2[4Fe-4S]-[ferredoxin] + 2 ATP + 2 H2O. It functions in the pathway porphyrin-containing compound metabolism; chlorophyll biosynthesis (light-independent). Component of the dark-operative protochlorophyllide reductase (DPOR) that uses Mg-ATP and reduced ferredoxin to reduce ring D of protochlorophyllide (Pchlide) to form chlorophyllide a (Chlide). This reaction is light-independent. The NB-protein (ChlN-ChlB) is the catalytic component of the complex. This is Light-independent protochlorophyllide reductase subunit B from Prochlorococcus marinus (strain MIT 9215).